We begin with the raw amino-acid sequence, 422 residues long: Probable protein phosphatase 2C 69 (422 aa).

The 250-residue stretch at 45 to 294 folds into the PPM-type phosphatase domain; that stretch reads TLLLAEAGER…DDTTCIVVDI (250 aa). Mn(2+)-binding residues include D70, G71, D246, and D285.

It belongs to the PP2C family. Requires Mg(2+) as cofactor. It depends on Mn(2+) as a cofactor.

It catalyses the reaction O-phospho-L-seryl-[protein] + H2O = L-seryl-[protein] + phosphate. The catalysed reaction is O-phospho-L-threonyl-[protein] + H2O = L-threonyl-[protein] + phosphate. This is Probable protein phosphatase 2C 69 from Oryza sativa subsp. japonica (Rice).